The chain runs to 266 residues: GTP cyclohydrolase FolE2 (266 aa).

The protein belongs to the GTP cyclohydrolase IV family.

The catalysed reaction is GTP + H2O = 7,8-dihydroneopterin 3'-triphosphate + formate + H(+). Its pathway is cofactor biosynthesis; 7,8-dihydroneopterin triphosphate biosynthesis; 7,8-dihydroneopterin triphosphate from GTP: step 1/1. Its function is as follows. Converts GTP to 7,8-dihydroneopterin triphosphate. The sequence is that of GTP cyclohydrolase FolE2 from Syntrophotalea carbinolica (strain DSM 2380 / NBRC 103641 / GraBd1) (Pelobacter carbinolicus).